The following is a 211-amino-acid chain: Ribosomal RNA small subunit methyltransferase G (211 aa).

Residues glycine 73, 126–127 (IE), and arginine 142 each bind S-adenosyl-L-methionine.

It belongs to the methyltransferase superfamily. RNA methyltransferase RsmG family.

Its subcellular location is the cytoplasm. The catalysed reaction is guanosine(527) in 16S rRNA + S-adenosyl-L-methionine = N(7)-methylguanosine(527) in 16S rRNA + S-adenosyl-L-homocysteine. Specifically methylates the N7 position of guanine in position 527 of 16S rRNA. The protein is Ribosomal RNA small subunit methyltransferase G of Methylorubrum extorquens (strain CM4 / NCIMB 13688) (Methylobacterium extorquens).